The following is a 315-amino-acid chain: Glycine--tRNA ligase alpha subunit (315 aa).

This sequence belongs to the class-II aminoacyl-tRNA synthetase family. In terms of assembly, tetramer of two alpha and two beta subunits.

It is found in the cytoplasm. It catalyses the reaction tRNA(Gly) + glycine + ATP = glycyl-tRNA(Gly) + AMP + diphosphate. The polypeptide is Glycine--tRNA ligase alpha subunit (Pseudomonas paraeruginosa (strain DSM 24068 / PA7) (Pseudomonas aeruginosa (strain PA7))).